A 484-amino-acid chain; its full sequence is 6-phosphogluconate dehydrogenase, decarboxylating (484 aa).

NADP(+)-binding positions include 11 to 16, 34 to 36, 76 to 78, and N104; these read GLAVMG, NRT, and VRA. Substrate contacts are provided by residues N104 and 130–132; that span reads SGG. The active-site Proton acceptor is the K185. 188–189 serves as a coordination point for substrate; the sequence is HN. Residue E192 is the Proton donor of the active site. Substrate contacts are provided by Y193, K262, R289, R447, and H453.

It belongs to the 6-phosphogluconate dehydrogenase family. Homodimer.

It catalyses the reaction 6-phospho-D-gluconate + NADP(+) = D-ribulose 5-phosphate + CO2 + NADPH. Its pathway is carbohydrate degradation; pentose phosphate pathway; D-ribulose 5-phosphate from D-glucose 6-phosphate (oxidative stage): step 3/3. Its function is as follows. Catalyzes the oxidative decarboxylation of 6-phosphogluconate to ribulose 5-phosphate and CO(2), with concomitant reduction of NADP to NADPH. The protein is 6-phosphogluconate dehydrogenase, decarboxylating (gnd) of Haemophilus influenzae (strain ATCC 51907 / DSM 11121 / KW20 / Rd).